A 445-amino-acid chain; its full sequence is Tripartite motif-containing protein 43B (445 aa).

An RING-type zinc finger spans residues 16 to 57 (CSICQGIFMNPVYLKCGHKFCEACLLLFQEDIKFPAYCPMCM). The B box-type zinc finger occupies 88 to 129 (SEEHKCVTHKAKKMIFCDKSKILLCHLCSDSQEHSGHTHCSI). Cys93, His96, Cys115, and His121 together coordinate Zn(2+). The region spanning 271 to 445 (RLRAHSIPGL…VRPFFSAVYT (175 aa)) is the B30.2/SPRY domain.

It belongs to the TRIM/RBCC family.

The sequence is that of Tripartite motif-containing protein 43B from Mus musculus (Mouse).